Here is a 631-residue protein sequence, read N- to C-terminus: MKKYRVNVQGMTCSGCEQHVAVALENMGAKAIEVDFRRGEAVFELPDDVKVEDAKNAIADANYHPGEAEEFQSEQKTNLLKKYRLNVEGMTCTGCEEHIAVALENAGAKGIEVDFRRGEALFELPYDVDIDIAKTAITDAQYQPGEAEEIQVQSEKRTDVSLNDEGNYDYDYIIIGSGGAAFSSAIEAVALNAKVAMIERGTVGGTCVNVGCVPSKTLLRAGEINHLAKNNPFVGLHTSASNVDLAPLVKQKNDLVTEMRNEKYVNLIDDYGFELIKGESKFVNENTVEVNGNQITAKRFLIATGASSTAPNIPGLDEVDYLTSTSLLELKKVPNRLTVIGSGYIGMELGQLFHNLGSEVTLIQRSERLLKEYDPEISEAITKALTEQGINLVTGATYERVEQDGDIKKVHVEINGKKRIIEAEQLLIATGRKPIQTSLNLHAAGVEVGSRGEIVIDDYLKTTNSRIYSAGDVTPGPQFVYVAAYEGGLAARNAIGGLNQKVNLEVVPGVTFTSPSIATVGLTEQQAKEKGYEVKTSVLPLDAVPRALVNRETTGVFKLVADAKTLKVLGAHVVAENAGDVIYAATLAVKFGLTVGDLRETMAPYLTMAEGLKLAVLTFDKDVSKLSCCAG.

HMA domains lie at 2–66 (KKYR…YHPG) and 81–145 (KKYR…YQPG). A metal cation is bound by residues Cys13, Cys16, Cys92, and Cys95. Residues Ala181, Gly201, and Thr206 each coordinate FAD. A disulfide bond links Cys207 and Cys212. FAD-binding residues include Lys216, Asp472, and Val480. Cys628 and Cys629 together coordinate Hg(2+).

It belongs to the class-I pyridine nucleotide-disulfide oxidoreductase family. In terms of assembly, homodimer. The cofactor is FAD.

It carries out the reaction Hg + NADP(+) + H(+) = Hg(2+) + NADPH. Resistance to Hg(2+) in bacteria appears to be governed by a specialized system which includes mercuric reductase. MerA protein is responsible for volatilizing mercury as Hg(0). The protein is Mercuric reductase (merA) of Bacillus cereus.